The primary structure comprises 304 residues: Acetylglutamate kinase (304 aa).

Substrate-binding positions include 74 to 75, Arg96, and Asn201; that span reads GG.

It belongs to the acetylglutamate kinase family. ArgB subfamily.

Its subcellular location is the cytoplasm. It catalyses the reaction N-acetyl-L-glutamate + ATP = N-acetyl-L-glutamyl 5-phosphate + ADP. The protein operates within amino-acid biosynthesis; L-arginine biosynthesis; N(2)-acetyl-L-ornithine from L-glutamate: step 2/4. Functionally, catalyzes the ATP-dependent phosphorylation of N-acetyl-L-glutamate. In Alkalilimnicola ehrlichii (strain ATCC BAA-1101 / DSM 17681 / MLHE-1), this protein is Acetylglutamate kinase.